A 332-amino-acid chain; its full sequence is Fructose-1,6-bisphosphatase class 1 1 (332 aa).

Residues Glu-92, Asp-115, Leu-117, and Asp-118 each coordinate Mg(2+). Residues 118–121 (DGSS), Asn-211, Tyr-244, 262–264 (YLY), and Lys-274 contribute to the substrate site. Residue Glu-280 coordinates Mg(2+).

It belongs to the FBPase class 1 family. As to quaternary structure, homotetramer. Requires Mg(2+) as cofactor.

The protein localises to the cytoplasm. It catalyses the reaction beta-D-fructose 1,6-bisphosphate + H2O = beta-D-fructose 6-phosphate + phosphate. Its pathway is carbohydrate biosynthesis; gluconeogenesis. The chain is Fructose-1,6-bisphosphatase class 1 1 from Christiangramia forsetii (strain DSM 17595 / CGMCC 1.15422 / KT0803) (Gramella forsetii).